Reading from the N-terminus, the 171-residue chain is ATP synthase subunit b (171 aa).

Residues 4–24 form a helical membrane-spanning segment; the sequence is IAFFVICVGFPSLIFASASIQ.

This sequence belongs to the ATPase B chain family. F-type ATPases have 2 components, F(1) - the catalytic core - and F(0) - the membrane proton channel. F(1) has five subunits: alpha(3), beta(3), gamma(1), delta(1), epsilon(1). F(0) has three main subunits: a(1), b(2) and c(10-14). The alpha and beta chains form an alternating ring which encloses part of the gamma chain. F(1) is attached to F(0) by a central stalk formed by the gamma and epsilon chains, while a peripheral stalk is formed by the delta and b chains.

Its subcellular location is the cell inner membrane. Its function is as follows. F(1)F(0) ATP synthase produces ATP from ADP in the presence of a proton or sodium gradient. F-type ATPases consist of two structural domains, F(1) containing the extramembraneous catalytic core and F(0) containing the membrane proton channel, linked together by a central stalk and a peripheral stalk. During catalysis, ATP synthesis in the catalytic domain of F(1) is coupled via a rotary mechanism of the central stalk subunits to proton translocation. Functionally, component of the F(0) channel, it forms part of the peripheral stalk, linking F(1) to F(0). This is ATP synthase subunit b from Helicobacter hepaticus (strain ATCC 51449 / 3B1).